The primary structure comprises 606 residues: Serine/threonine-protein kinase A-Raf (606 aa).

The RBD domain occupies 19-91 (GTVKVYLPNK…DGEELIVEVL (73 aa)). The Phorbol-ester/DAG-type zinc-finger motif lies at 98 to 144 (MHNFVRKTFFSLAFCDFCLKFLFHGFRCQTCGYKFHQHCSSKVPTVC). Positions 99, 112, 115, 125, 128, 133, 136, and 144 each coordinate Zn(2+). Residues Ser157 and Ser162 each carry the phosphoserine modification. 2 disordered regions span residues 158 to 207 (VQDL…NAPL) and 241 to 290 (TDAA…DKKK). A Phosphothreonine modification is found at Thr181. A phosphoserine mark is found at Ser186, Ser257, and Ser269. A compositionally biased stretch (low complexity) spans 254-267 (PRGSPSPASVSSGR). A compositionally biased stretch (basic and acidic residues) spans 274-289 (SPSEQRERKSLADDKK). Positions 310–570 (VQLLKRIGTG…PQILATIELL (261 aa)) constitute a Protein kinase domain. Residues 316–324 (IGTGSFGTV) and Lys336 contribute to the ATP site. Phosphothreonine is present on Thr318. The Proton acceptor role is filled by Asp429.

Belongs to the protein kinase superfamily. TKL Ser/Thr protein kinase family. RAF subfamily. As to quaternary structure, interacts with TH1L/NELFD. Zn(2+) is required as a cofactor. Post-translationally, dephosphorylation by the SHOC2-MRAS-PP1c (SMP) complex consisting of SHOC2, GTP-bound M-Ras/MRAS and the catalytic subunit of protein phosphatase 1 (PPP1CA, PPP1CB or PPP1CC); this relieves inactivation and stimulates kinase activity.

The enzyme catalyses L-seryl-[protein] + ATP = O-phospho-L-seryl-[protein] + ADP + H(+). The catalysed reaction is L-threonyl-[protein] + ATP = O-phospho-L-threonyl-[protein] + ADP + H(+). Involved in the transduction of mitogenic signals from the cell membrane to the nucleus. May also regulate the TOR signaling cascade. Phosphorylates PFKFB2. In Sus scrofa (Pig), this protein is Serine/threonine-protein kinase A-Raf (ARAF).